The following is a 163-amino-acid chain: 3-hydroxyacyl-[acyl-carrier-protein] dehydratase FabZ (163 aa).

His58 is a catalytic residue.

This sequence belongs to the thioester dehydratase family. FabZ subfamily.

The protein localises to the cytoplasm. The enzyme catalyses a (3R)-hydroxyacyl-[ACP] = a (2E)-enoyl-[ACP] + H2O. Involved in unsaturated fatty acids biosynthesis. Catalyzes the dehydration of short chain beta-hydroxyacyl-ACPs and long chain saturated and unsaturated beta-hydroxyacyl-ACPs. The polypeptide is 3-hydroxyacyl-[acyl-carrier-protein] dehydratase FabZ (Francisella philomiragia subsp. philomiragia (strain ATCC 25017 / CCUG 19701 / FSC 153 / O#319-036)).